Here is a 130-residue protein sequence, read N- to C-terminus: Metastasis-suppressor KiSS-1 (130 aa).

The N-terminal stretch at 1–19 is a signal peptide; sequence MISLASWQLLLLLCVASFG. Positions 52–91 are disordered; that stretch reads RYAESKPGAAGLRARRTSPCPPVENPTGHQRPPCATRSRL. A disulfide bridge links cysteine 71 with cysteine 85. At tyrosine 110 the chain carries Phosphotyrosine. The essential for receptor binding and receptor activation stretch occupies residues 110 to 119; sequence YNWNSFGLRY. At tyrosine 119 the chain carries Tyrosine amide.

Belongs to the KISS1 family. As to expression, highest levels in the cecum and colon. Moderate levels present in the liver, spleen, kidney, ovary, uterus and small intestine. Low levels in the stomach, pancreas and placenta. Expressed only moderately in the placenta. Persistent expression is detected in hypothalamus throughout postnatal development, with maximum expression levels at puberty in both male and female. Hypothalamic expression is sensitive to neonatal imprinting by estrogen. Expression is higher in the hypothalamus than in the brainstem and spinal cord. In the brain, metastin-like immunoreactivity is found mainly in three groups of cells: dorsomedial hypothalamic nucleus, nucleus of the solitary tract, and caudal ventrolateral medulla.

Its subcellular location is the secreted. Functionally, metastasis suppressor protein. May regulate events downstream of cell-matrix adhesion, perhaps involving cytoskeletal reorganization. Generates a C-terminally amidated peptide, metastin which functions as the endogenous ligand of the G-protein coupled receptor GPR54. The receptor is also essential for normal gonadotropin-released hormone physiology and for puberty. The hypothalamic KiSS1/GPR54 system is a pivotal factor in central regulation of the gonadotropic axis at puberty and in adulthood. Intracerebroventricular administration induces an increase in serum LH and FSH levels in prepubertal male and female as well as in adult animals. This is Metastasis-suppressor KiSS-1 (Kiss1) from Rattus norvegicus (Rat).